Reading from the N-terminus, the 251-residue chain is 3-deoxy-manno-octulosonate cytidylyltransferase (251 aa).

It belongs to the KdsB family.

The protein resides in the cytoplasm. The catalysed reaction is 3-deoxy-alpha-D-manno-oct-2-ulosonate + CTP = CMP-3-deoxy-beta-D-manno-octulosonate + diphosphate. The protein operates within nucleotide-sugar biosynthesis; CMP-3-deoxy-D-manno-octulosonate biosynthesis; CMP-3-deoxy-D-manno-octulosonate from 3-deoxy-D-manno-octulosonate and CTP: step 1/1. It participates in bacterial outer membrane biogenesis; lipopolysaccharide biosynthesis. In terms of biological role, activates KDO (a required 8-carbon sugar) for incorporation into bacterial lipopolysaccharide in Gram-negative bacteria. The sequence is that of 3-deoxy-manno-octulosonate cytidylyltransferase from Vibrio vulnificus (strain YJ016).